Reading from the N-terminus, the 300-residue chain is m7GpppN-mRNA hydrolase NUDT17 (300 aa).

The Nudix hydrolase domain maps to 88–239 (SRGVDVGVAV…KECVQIPADL (152 aa)). The Nudix box motif lies at 127–148 (GHVELDEKLLDAGLRELLEETG). Positions 142 and 146 each coordinate Mg(2+).

The protein belongs to the Nudix hydrolase family. Requires Mg(2+) as cofactor. Mn(2+) serves as cofactor.

The enzyme catalyses a 5'-end (N(7)-methyl 5'-triphosphoguanosine)-ribonucleoside in mRNA + H2O = N(7)-methyl-GDP + a 5'-end phospho-ribonucleoside in mRNA + 2 H(+). Its function is as follows. Acts as a decapping enzyme capable of hydrolyzing monomethylated capped RNAs (in vitro). Hydrolyzes monomethylated capped RNA after alpha and beta phosphates to form N(7)-methyl-GDP. Shows low activity towards unmethylated capped RNA. The chain is m7GpppN-mRNA hydrolase NUDT17 (nudt17) from Danio rerio (Zebrafish).